Here is a 136-residue protein sequence, read N- to C-terminus: Aspartate 1-decarboxylase (136 aa).

S25 acts as the Schiff-base intermediate with substrate; via pyruvic acid in catalysis. S25 is subject to Pyruvic acid (Ser). Residue T57 coordinates substrate. Y58 serves as the catalytic Proton donor. G73–A75 lines the substrate pocket.

The protein belongs to the PanD family. As to quaternary structure, heterooctamer of four alpha and four beta subunits. Pyruvate serves as cofactor. Is synthesized initially as an inactive proenzyme, which is activated by self-cleavage at a specific serine bond to produce a beta-subunit with a hydroxyl group at its C-terminus and an alpha-subunit with a pyruvoyl group at its N-terminus.

The protein resides in the cytoplasm. The catalysed reaction is L-aspartate + H(+) = beta-alanine + CO2. The protein operates within cofactor biosynthesis; (R)-pantothenate biosynthesis; beta-alanine from L-aspartate: step 1/1. Functionally, catalyzes the pyruvoyl-dependent decarboxylation of aspartate to produce beta-alanine. In Corynebacterium glutamicum (strain R), this protein is Aspartate 1-decarboxylase.